Consider the following 198-residue polypeptide: Cell division protein SepF (198 aa).

The tract at residues Glu-170–Gln-198 is disordered. Residues Ala-179–Ala-188 are compositionally biased toward low complexity.

It belongs to the SepF family. Homodimer. Interacts with FtsZ.

It localises to the cytoplasm. Functionally, cell division protein that is part of the divisome complex and is recruited early to the Z-ring. Probably stimulates Z-ring formation, perhaps through the cross-linking of FtsZ protofilaments. Its function overlaps with FtsA. In Nostoc sp. (strain PCC 7120 / SAG 25.82 / UTEX 2576), this protein is Cell division protein SepF.